Here is a 265-residue protein sequence, read N- to C-terminus: Cell adhesion molecule CEACAM10 (265 aa).

Positions 1 to 33 are cleaved as a signal peptide; the sequence is MELASAHLHKGQVPWVGLLLTASLLTYWSPATT. 2 consecutive Ig-like V-type domains span residues 35-142 and 155-262; these read QVTV…HVHP and QVTV…NVHA. N-linked (GlcNAc...) asparagine glycans are attached at residues Asn-44, Asn-87, and Asn-224.

The protein belongs to the immunoglobulin superfamily. CEA family. In terms of tissue distribution, abundant in seminal vesicle and traces in epididymis and prostate (at protein level). Highly expressed in seminal vesicle, minor in colon and placenta and, to a lesser extent, in small intestine, caecum, stomach, salivary gland and bone marrow.

The protein localises to the secreted. The protein resides in the extracellular space. Functionally, may interact with other CEACAM proteins on the sperm surface. This chain is Cell adhesion molecule CEACAM10, found in Mus musculus (Mouse).